A 396-amino-acid polypeptide reads, in one-letter code: MYGTCHLSTHKLKIGIVVGEVSGDTLGVQLMRSFREQGIDAEFEGIGGPQMIAEGFNSFYPMETLSVMGIVEVLKDIKKLFAVRDGLVQRWREHPVDVFVGIDAPDFNLRLSKSLKEKNLPIRTVQYVSPSVWAWRQGRVKGIKATIDLVLCLFPFEKNFYEQHSVRAAFVGHPLAKLLPLNNSLVEAKQALGLNPEKTYIALLPGSRKGEVERLLPMLLGSAEILLKKYPDVEYLIPAISDVRKKQIQDGIQSIAPQYAQKLHVLENQDQESKIGRQVMNASDIVALASGTATLEAMLLHRPMVSFYKLNTLTYIIAKLLVKIQYYSLPNIIAGKKVIEELIQKDANPERLAHEIEKLMNNETAKIQMMQHFSMHKQLISGNTEDPVQAIMTLIQ.

It belongs to the LpxB family.

It catalyses the reaction a lipid X + a UDP-2-N,3-O-bis[(3R)-3-hydroxyacyl]-alpha-D-glucosamine = a lipid A disaccharide + UDP + H(+). It functions in the pathway bacterial outer membrane biogenesis; LPS lipid A biosynthesis. Condensation of UDP-2,3-diacylglucosamine and 2,3-diacylglucosamine-1-phosphate to form lipid A disaccharide, a precursor of lipid A, a phosphorylated glycolipid that anchors the lipopolysaccharide to the outer membrane of the cell. The sequence is that of Lipid-A-disaccharide synthase from Acinetobacter baylyi (strain ATCC 33305 / BD413 / ADP1).